The sequence spans 91 residues: Non-specific lipid-transfer protein P3 (91 aa).

4 cysteine pairs are disulfide-bonded: Cys3–Cys50, Cys13–Cys27, Cys28–Cys73, and Cys48–Cys87.

It localises to the secreted. In terms of biological role, plant non-specific lipid-transfer proteins transfer phospholipids as well as galactolipids across membranes. May play a role in wax or cutin deposition in the cell walls of expanding epidermal cells and certain secretory tissues. In Vitis sp. (Grape), this protein is Non-specific lipid-transfer protein P3.